Consider the following 563-residue polypeptide: (R)-mandelonitrile lyase 2 (563 aa).

The N-terminal stretch at 1–27 (MEKSTMSAILLVLYIFVLHLQYSEVHS) is a signal peptide. Residues 63-64 (TS), 82-83 (ER), valine 129, threonine 133, and 137-140 (NAGV) each bind FAD. Residues asparagine 145 and asparagine 162 are each glycosylated (N-linked (GlcNAc...) asparagine). Residue valine 244 participates in FAD binding. Position 355 (cysteine 355) interacts with substrate. Residues asparagine 379 and asparagine 419 are each glycosylated (N-linked (GlcNAc...) asparagine). A disulfide bridge connects residues cysteine 426 and cysteine 477. Tyrosine 484 lines the substrate pocket. FAD is bound by residues 485–486 (WH) and glycine 514. Residue histidine 486 is the Proton donor of the active site. Histidine 524 acts as the Proton acceptor in catalysis. 525-526 (PQ) contacts FAD.

This sequence belongs to the GMC oxidoreductase family. In terms of assembly, monomer. FAD serves as cofactor. In terms of processing, glycosylated. Deglycosylation does not affect the enzymatic activity.

The catalysed reaction is (R)-mandelonitrile = benzaldehyde + hydrogen cyanide. Its function is as follows. Involved in cyanogenesis, the release of HCN from injured tissues. Catalyzes the stereospecific addition of HCN to a variety of aldehydes in vitro. Has no oxidase activity. The redox properties of the FAD cofactor appear to be unimportant for catalysis. This chain is (R)-mandelonitrile lyase 2 (MDL2), found in Prunus dulcis (Almond).